Consider the following 581-residue polypeptide: Rhodanese-like domain-containing protein 6 (581 aa).

Positions 158-258 (ENKELVLLDA…YLEQFPSGGF (101 aa)) constitute a Rhodanese domain. Catalysis depends on Cys-216, which acts as the Cysteine persulfide intermediate.

The protein is Rhodanese-like domain-containing protein 6 (STR6) of Arabidopsis thaliana (Mouse-ear cress).